A 782-amino-acid polypeptide reads, in one-letter code: MGRKDKSDREKKSKKRYYEDEEEDEEVIGGESQEAVPAAAGKQVDESSTKLDEYGAKDYRLQMLLKNDHSSRPLWVAPDGHIFLEAFSPVYKYAQDFLVAISEPVCRPTHAHEYKLTAYSLYAAVSVGLQTSDIIEYLQKLSKTSVPDGIVQFIKLCTVSYGKVKLVLKHNRYFVESAFPDVIQRLLQDTVIRDCRLRSAEGEETELITETISSKSAISKSQQDNGGPSSSQPADGQRSGTQVPEDIFSYYEQMDKEEEEEEETQTVSFEIRQEMIEELQKRCIQLEYPLLAEYDFRNDTVNPDINMDLKPTAVLRPYQEKSLRKMFGNGRARSGVIVLPCGAGKSLVGVTAACTVRKRCLVLGNSSVSVEQWKAQFKMWSTIDDSQICRFTSDAKDKPIGCSVAISTYSMLGHTTKRSWEAERVMEWMKSQEWGLIILDEVHTIPAKMFRRVLTIVQAHCKLGLTATLVREDDKIVDLNFLIGPKLYEANWMELQNNGYIAKVQCAEVWCPMSPEFYREYVAIKTKKRILLYTMNPNKFRACQFLIRFHERRNDKIIVFADNVFALKEYAIRLNKPYIYGPTSQGERMQILQNFKHNPKINTIFISKVGDTSFDLPEANVLIQISSHGGSRRQEAQRLGRVLRAKKGMVAEEYNAYFYSLVSQDTQEMAYSTKRQRFLVDQGYSFKVITKLAGMEEEDLMFSTRDEQQQLLQKVLAASDLDAEEEVVMGEVGGKPQFSRRAGTMSSMSGADDALYMEYQMPRGSKASVGKNIHPLFKRFRK.

The span at 1–11 shows a compositional bias: basic and acidic residues; sequence MGRKDKSDREK. Disordered regions lie at residues 1–47 and 211–242; these read MGRK…VDES and TISS…SGTQ. The Nuclear localization signal motif lies at 6 to 17; sequence KSDREKKSKKRY. Acidic residues predominate over residues 19–28; the sequence is EDEEEDEEVI. The segment covering 211 to 223 has biased composition (low complexity); that stretch reads TISSKSAISKSQQ. Residues 224 to 242 show a composition bias toward polar residues; the sequence is DNGGPSSSQPADGQRSGTQ. One can recognise a Helicase ATP-binding domain in the interval 326–487; sequence MFGNGRARSG…DLNFLIGPKL (162 aa). 339-346 provides a ligand contact to ATP; the sequence is LPCGAGKS. Positions 440–443 match the DEVH box motif; the sequence is DEVH. The Helicase C-terminal domain maps to 541-701; sequence RACQFLIRFH…LAGMEEEDLM (161 aa).

The protein belongs to the helicase family. RAD25/XPB subfamily. Component of the 7-subunit TFIIH core complex composed of XPB/ERCC3, XPD/ERCC2, GTF2H1, GTF2H2, GTF2H3, GTF2H4 and GTF2H5, which is active in NER. The core complex associates with the 3-subunit CDK-activating kinase (CAK) module composed of CCNH/cyclin H, CDK7 and MNAT1 to form the 10-subunit holoenzyme (holo-TFIIH) active in transcription. Interacts with PUF60. Interacts with ATF7IP. Interacts with Epstein-Barr virus EBNA2.

It localises to the nucleus. It catalyses the reaction Couples ATP hydrolysis with the unwinding of duplex DNA by translocating in the 3'-5' direction.. The catalysed reaction is ATP + H2O = ADP + phosphate + H(+). Its function is as follows. ATP-dependent 3'-5' DNA helicase/translocase; binds dsDNA rather than ssDNA, unzipping it in a translocase rather than classical helicase activity. Component of the general transcription and DNA repair factor IIH (TFIIH) core complex. When complexed to CDK-activating kinase (CAK), involved in RNA transcription by RNA polymerase II. The ATPase activity of XPB/ERCC3, but not its helicase activity, is required for DNA opening; it may wrap around the damaged DNA wedging it open, causing localized melting and twisting that allows XPD/ERCC2 helicase to anchor. The ATP-dependent helicase activity of XPB/ERCC3 may be required for promoter escape. Also involved in transcription-coupled nucleotide excision repair (NER) of damaged DNA. In NER, TFIIH acts by opening DNA around the lesion to allow the excision of the damaged oligonucleotide and its replacement by a new DNA fragment. This Danio rerio (Zebrafish) protein is General transcription and DNA repair factor IIH helicase/translocase subunit XPB (ercc3).